The primary structure comprises 55 residues: ATP synthase protein 8 (55 aa).

A helical transmembrane segment spans residues 6–26 (PHPWFAILVFSWIFFLVILPK).

This sequence belongs to the ATPase protein 8 family. As to quaternary structure, F-type ATPases have 2 components, CF(1) - the catalytic core - and CF(0) - the membrane proton channel.

Its subcellular location is the mitochondrion membrane. Functionally, mitochondrial membrane ATP synthase (F(1)F(0) ATP synthase or Complex V) produces ATP from ADP in the presence of a proton gradient across the membrane which is generated by electron transport complexes of the respiratory chain. F-type ATPases consist of two structural domains, F(1) - containing the extramembraneous catalytic core and F(0) - containing the membrane proton channel, linked together by a central stalk and a peripheral stalk. During catalysis, ATP synthesis in the catalytic domain of F(1) is coupled via a rotary mechanism of the central stalk subunits to proton translocation. Part of the complex F(0) domain. Minor subunit located with subunit a in the membrane. This Squalus acanthias (Spiny dogfish) protein is ATP synthase protein 8 (MT-ATP8).